The following is a 352-amino-acid chain: C-C chemokine receptor type 5 (352 aa).

Residues 1–30 lie on the Extracellular side of the membrane; that stretch reads MDYQVSSPTYDIDYYTSEPCQKVNVKQIAA. The residue at position 3 (tyrosine 3) is a Sulfotyrosine. O-linked (GalNAc...) serine glycans are attached at residues serine 6 and serine 7. Sulfotyrosine is present on residues tyrosine 10, tyrosine 14, and tyrosine 15. 2 disulfides stabilise this stretch: cysteine 20-cysteine 269 and cysteine 101-cysteine 178. A helical membrane pass occupies residues 31–58; it reads RLLPPLYSLVFIFGFVGNILVVLILINC. Residues 59–68 are Cytoplasmic-facing; the sequence is KRLKSMTDIY. The helical transmembrane segment at 69 to 89 threads the bilayer; it reads LLNLAISDLFFLLTVPFWAHY. The Extracellular portion of the chain corresponds to 90–102; it reads AAAQWDFGNTMCQ. The chain crosses the membrane as a helical span at residues 103-124; sequence LLTGLYFIGFFSGIFFIILLTI. The Cytoplasmic segment spans residues 125 to 141; sequence DRYLAIVHAVFALKART. A helical membrane pass occupies residues 142–166; it reads VTFGVVTSVITWVVAVFASLPGIIF. Over 167-198 the chain is Extracellular; it reads TRSQREGVHYTCSSHFPYSQYQFWKNFQTLKI. Residues 199-218 form a helical membrane-spanning segment; it reads VILGLVLPLLVMVICYSGIL. Residues 219–235 are Cytoplasmic-facing; it reads KTLLRCRNEKKRHRAVR. A helical membrane pass occupies residues 236 to 260; sequence LIFTIMIVYFLFWAPYNIVLLLNTF. Residues 261–277 lie on the Extracellular side of the membrane; that stretch reads QEFFGLNNCSSSNRLDQ. The chain crosses the membrane as a helical span at residues 278 to 301; that stretch reads AMQVTETLGMTHCCINPIIYAFVG. The Cytoplasmic segment spans residues 302 to 352; that stretch reads EKFRNYLLVFFQKHIAKRFCKCCSIFQQEAPERASSVYTRSTGEQETSVGL. S-palmitoyl cysteine attachment occurs at residues cysteine 321, cysteine 323, and cysteine 324. Residues serine 336, serine 337, serine 342, and serine 349 each carry the phosphoserine; by BARK1 modification.

The protein belongs to the G-protein coupled receptor 1 family. In terms of assembly, interacts with PRAF2. Efficient ligand binding to CCL3/MIP-1alpha and CCL4/MIP-1beta requires sulfation, O-glycosylation and sialic acid modifications. Glycosylation on Ser-6 is required for efficient binding of CCL4. Interacts with GRK2. Interacts with ARRB1 and ARRB2. Interacts with CNIH4. Interacts with S100A4; this interaction stimulates T-lymphocyte chemotaxis. Post-translationally, sulfated on at least 2 of the N-terminal tyrosines. Sulfation is required for efficient binding of the chemokines, CCL3 and CCL4. In terms of processing, palmitoylation in the C-terminal is important for cell surface expression. Phosphorylation on serine residues in the C-terminal is stimulated by binding CC chemokines especially by APO-RANTES. Post-translationally, O-glycosylated, but not N-glycosylated. Ser-6 appears to be the major site even if Ser-7 may be also O-glycosylated. Also sialylated glycans present which contribute to chemokine binding. Thr-16 and Ser-17 may also be glycosylated and, if so, with small moieties such as a T-antigen.

It localises to the cell membrane. Receptor for a number of inflammatory CC-chemokines including CCL3/MIP-1-alpha, CCL4/MIP-1-beta and RANTES and subsequently transduces a signal by increasing the intracellular calcium ion level. May play a role in the control of granulocytic lineage proliferation or differentiation. Participates in T-lymphocyte migration to the infection site by acting as a chemotactic receptor. The protein is C-C chemokine receptor type 5 (CCR5) of Rhinopithecus avunculus (Tonkin snub-nosed monkey).